The chain runs to 329 residues: Acetyl-coenzyme A carboxylase carboxyl transferase subunit alpha (329 aa).

A CoA carboxyltransferase C-terminal domain is found at Gln-40–Glu-294.

Belongs to the AccA family. As to quaternary structure, acetyl-CoA carboxylase is a heterohexamer composed of biotin carboxyl carrier protein (AccB), biotin carboxylase (AccC) and two subunits each of ACCase subunit alpha (AccA) and ACCase subunit beta (AccD).

Its subcellular location is the cytoplasm. It catalyses the reaction N(6)-carboxybiotinyl-L-lysyl-[protein] + acetyl-CoA = N(6)-biotinyl-L-lysyl-[protein] + malonyl-CoA. The protein operates within lipid metabolism; malonyl-CoA biosynthesis; malonyl-CoA from acetyl-CoA: step 1/1. Component of the acetyl coenzyme A carboxylase (ACC) complex. First, biotin carboxylase catalyzes the carboxylation of biotin on its carrier protein (BCCP) and then the CO(2) group is transferred by the carboxyltransferase to acetyl-CoA to form malonyl-CoA. The sequence is that of Acetyl-coenzyme A carboxylase carboxyl transferase subunit alpha from Prochlorococcus marinus (strain NATL1A).